The sequence spans 122 residues: Large ribosomal subunit protein uL18 (122 aa).

Belongs to the universal ribosomal protein uL18 family. Part of the 50S ribosomal subunit; part of the 5S rRNA/L5/L18/L25 subcomplex. Contacts the 5S and 23S rRNAs.

In terms of biological role, this is one of the proteins that bind and probably mediate the attachment of the 5S RNA into the large ribosomal subunit, where it forms part of the central protuberance. The protein is Large ribosomal subunit protein uL18 of Desulfitobacterium hafniense (strain DSM 10664 / DCB-2).